The primary structure comprises 336 residues: Cytosolic 5'-nucleotidase 3A (336 aa).

Asp88 (nucleophile) is an active-site residue. Residues Asp88 and Asp90 each coordinate Mg(2+). The active-site Proton donor is the Asp90. Residue Glu135 coordinates CMP. Positions 135 and 156 each coordinate N(7)-methyl-GMP. Substrate contacts are provided by residues 203–204 (SA) and Lys252. A Mg(2+)-binding site is contributed by Asp277. Ser278 is subject to Phosphoserine.

Belongs to the pyrimidine 5'-nucleotidase family. As to quaternary structure, monomer. In terms of tissue distribution, isoforms 1, 3 and 4 are expressed in reticulocytes. Isoform 4 is hardly detectable in bone marrow and fetal liver.

Its subcellular location is the cytoplasm. It localises to the endoplasmic reticulum. The enzyme catalyses N(7)-methyl-GMP + H2O = N(7)-methylguanosine + phosphate. The catalysed reaction is CMP + H2O = cytidine + phosphate. It catalyses the reaction a ribonucleoside 5'-phosphate + H2O = a ribonucleoside + phosphate. Its function is as follows. Nucleotidase which shows specific activity towards cytidine monophosphate (CMP) and 7-methylguanosine monophosphate (m(7)GMP). CMP seems to be the preferred substrate. The polypeptide is Cytosolic 5'-nucleotidase 3A (NT5C3A) (Homo sapiens (Human)).